A 358-amino-acid chain; its full sequence is MPPPPRCAATTAHHSLLGSPTCLARPRRRCCPVRAAVAVQAEAQAKVSLIRIGTRGSPLALAQAHETRDKLKAAHSELAEEGAVEIVIIKTTGDMILDKPLADIGGKGLFTKEIDDALLQGRIDIAVHSMKDVPTYLPEGTILPCNLPREDVRDAFICLTASSLAELPAGSVVGSASLRRQSQILYKYPSLKVVNFRGNVQTRLRKLKEGDVHATLLALAGLKRLNMAETATSVLSVDEMLPAVAQGAIGIACRSSDDTMMNYLSSLNHEDTRLAVACEREFLSVLDGNCRTPIAAYASRDKDGNCSFRGLLASPDGSTVYETSRTGPYDFDIMVEMGKDAGHELKAKAGPGFFDSLQ.

Residues 1-24 form the signal peptide; it reads MPPPPRCAATTAHHSLLGSPTCLA. Cys290 is modified (S-(dipyrrolylmethanemethyl)cysteine).

Belongs to the HMBS family. Dipyrromethane is required as a cofactor.

The protein resides in the plastid. It is found in the chloroplast. The enzyme catalyses 4 porphobilinogen + H2O = hydroxymethylbilane + 4 NH4(+). It participates in porphyrin-containing compound metabolism; protoporphyrin-IX biosynthesis; coproporphyrinogen-III from 5-aminolevulinate: step 2/4. Its pathway is porphyrin-containing compound metabolism; chlorophyll biosynthesis. Tetrapolymerization of the monopyrrole PBG into the hydroxymethylbilane pre-uroporphyrinogen in several discrete steps. The sequence is that of Porphobilinogen deaminase, chloroplastic (HEMC) from Oryza sativa subsp. japonica (Rice).